The primary structure comprises 842 residues: Molybdenum cofactor sulfurase (842 aa).

At lysine 236 the chain carries N6-(pyridoxal phosphate)lysine. Cysteine 402 is an active-site residue. Residues 637–680 (PGSQHGDAQRSSKARLQKHQITTDQESDVQEVHPGSGTTTDSTW) form a disordered region. In terms of domain architecture, MOSC spans 663-831 (SDVQEVHPGS…AARGDVAYPT (169 aa)).

This sequence belongs to the class-V pyridoxal-phosphate-dependent aminotransferase family. MOCOS subfamily. It depends on pyridoxal 5'-phosphate as a cofactor.

It carries out the reaction Mo-molybdopterin + L-cysteine + AH2 = thio-Mo-molybdopterin + L-alanine + A + H2O. It participates in cofactor biosynthesis; molybdopterin biosynthesis. In terms of biological role, sulfurates the molybdenum cofactor. Sulfation of molybdenum is essential for xanthine dehydrogenase (XDH) and aldehyde oxidase (ADO) enzymes in which molybdenum cofactor is liganded by 1 oxygen and 1 sulfur atom in active form. The chain is Molybdenum cofactor sulfurase from Pyricularia oryzae (strain 70-15 / ATCC MYA-4617 / FGSC 8958) (Rice blast fungus).